A 410-amino-acid chain; its full sequence is Arginine deiminase (410 aa).

The Amidino-cysteine intermediate role is filled by C399.

The protein belongs to the arginine deiminase family.

The protein localises to the cytoplasm. The catalysed reaction is L-arginine + H2O = L-citrulline + NH4(+). The protein operates within amino-acid degradation; L-arginine degradation via ADI pathway; carbamoyl phosphate from L-arginine: step 1/2. The sequence is that of Arginine deiminase from Treponema denticola (strain ATCC 35405 / DSM 14222 / CIP 103919 / JCM 8153 / KCTC 15104).